The sequence spans 243 residues: 5'-methylthioadenosine/S-adenosylhomocysteine nucleosidase (243 aa).

Residue glutamate 12 is the Proton acceptor of the active site. Residues glycine 78, methionine 158, and 179–180 (ME) each bind substrate. Aspartate 203 acts as the Proton donor in catalysis.

The protein belongs to the PNP/UDP phosphorylase family. MtnN subfamily.

It catalyses the reaction S-adenosyl-L-homocysteine + H2O = S-(5-deoxy-D-ribos-5-yl)-L-homocysteine + adenine. The enzyme catalyses S-methyl-5'-thioadenosine + H2O = 5-(methylsulfanyl)-D-ribose + adenine. It carries out the reaction 5'-deoxyadenosine + H2O = 5-deoxy-D-ribose + adenine. Its pathway is amino-acid biosynthesis; L-methionine biosynthesis via salvage pathway; S-methyl-5-thio-alpha-D-ribose 1-phosphate from S-methyl-5'-thioadenosine (hydrolase route): step 1/2. In terms of biological role, catalyzes the irreversible cleavage of the glycosidic bond in both 5'-methylthioadenosine (MTA) and S-adenosylhomocysteine (SAH/AdoHcy) to adenine and the corresponding thioribose, 5'-methylthioribose and S-ribosylhomocysteine, respectively. Also cleaves 5'-deoxyadenosine, a toxic by-product of radical S-adenosylmethionine (SAM) enzymes, into 5-deoxyribose and adenine. The chain is 5'-methylthioadenosine/S-adenosylhomocysteine nucleosidase from Colwellia psychrerythraea (strain 34H / ATCC BAA-681) (Vibrio psychroerythus).